Consider the following 556-residue polypeptide: Phospholipase D (556 aa).

The first 47 residues, 1–47 (MTSDQRPARLPTHKGKLLAPHRLHRLIPVSVALTTVCAALPSSTAYA), serve as a signal peptide directing secretion. A PLD phosphodiesterase 1 domain is found at 210 to 237 (SLSWNHSKLLVVDGKTAITGGINGWKDD). A disordered region spans residues 326–360 (SDPSSGYHPDLPTAPDTKCTVGLHDNTNADRDYDT). The PLD phosphodiesterase 2 domain maps to 484–511 (KPYALHHKLVSVDDSAFYIGSKNLYPAW).

This sequence belongs to the phospholipase D family. Post-translationally, probably has at least 1 disulfide bond.

Its subcellular location is the secreted. It catalyses the reaction a 1,2-diacyl-sn-glycero-3-phosphocholine + H2O = a 1,2-diacyl-sn-glycero-3-phosphate + choline + H(+). With respect to regulation, inhibited by mercaptoethanol and dithiothreitol. Its function is as follows. A reversible phospholipase active on phosphatidylcholine (PC) and phosphatidylethanolamine. Lysophosphatidylcholine and egg sphingomyelin are hydrolyzed about 50 times and 100 times more slowly than PC, respectively. During the transphosphatidylation reaction straight-chain hydroxy compounds, such as triethyleneglycol and triethyleneglycol monomethyl ether, were phosphatidylated in good yield, as were monosaccharides. Disaccharides and sugar alcohol reacted slowly, while N-acetyl-D-galactosamine, D-galactosamine and D-galacturonic acid were not phosphatidylated. The sequence is that of Phospholipase D from Streptomyces antibioticus.